We begin with the raw amino-acid sequence, 110 residues long: Bowman-Birk type proteinase inhibitor (110 aa).

Positions 1 to 19 (MVVLKVCLVLLFLVGGTTS) are cleaved as a signal peptide. Residues 20-39 (ANLRLSKLGLLMKSDHQHSN) constitute a propeptide that is removed on maturation. 7 disulfides stabilise this stretch: C47–C101, C48–C63, C51–C97, C53–C61, C71–C78, C75–C90, and C80–C88.

The protein belongs to the Bowman-Birk serine protease inhibitor family.

Functionally, inhibitor of trypsin and of chymotrypsin. This is Bowman-Birk type proteinase inhibitor from Glycine max (Soybean).